A 147-amino-acid chain; its full sequence is HTH-type transcriptional regulator MgrA (147 aa).

The HTH marR-type domain occupies 8-139; that stretch reads KEQLCFSLYN…LNRLLGKVIH (132 aa). Positions 55–78 form a DNA-binding region, H-T-H motif; it reads VKKVVTELALDTGTVSPLLKRMEQ.

It localises to the cytoplasm. Its function is as follows. Regulatory protein involved in autolytic activity, multidrug resistance and virulence. Controls autolysis by inactivating LytM, LytN (autolysins) and SarV (autolysis activator) and activating ArlRS, LrgAB and LytSR (autolysis inhibitors). Acts as a dual regulator for resistance to multiple drugs by inactivating NorB and tet38 and activating NorA. Positively controls the expression of virulence accessory gene regulator (agr) to promote alpha-hemolysin (hla) transcription and down-regulates staphylococcal accessory regulator (sarS), leading to repression of surface protein A (spa). Binds directly to hla promoter to augment its activation. Binds to sarS promoter to down-regulate spa expression. This chain is HTH-type transcriptional regulator MgrA (mgrA), found in Staphylococcus aureus (strain NCTC 8325 / PS 47).